Consider the following 955-residue polypeptide: Glycine dehydrogenase (decarboxylating) (955 aa).

N6-(pyridoxal phosphate)lysine is present on lysine 702.

This sequence belongs to the GcvP family. In terms of assembly, the glycine cleavage system is composed of four proteins: P, T, L and H. The cofactor is pyridoxal 5'-phosphate.

The enzyme catalyses N(6)-[(R)-lipoyl]-L-lysyl-[glycine-cleavage complex H protein] + glycine + H(+) = N(6)-[(R)-S(8)-aminomethyldihydrolipoyl]-L-lysyl-[glycine-cleavage complex H protein] + CO2. Functionally, the glycine cleavage system catalyzes the degradation of glycine. The P protein binds the alpha-amino group of glycine through its pyridoxal phosphate cofactor; CO(2) is released and the remaining methylamine moiety is then transferred to the lipoamide cofactor of the H protein. The chain is Glycine dehydrogenase (decarboxylating) from Bradyrhizobium diazoefficiens (strain JCM 10833 / BCRC 13528 / IAM 13628 / NBRC 14792 / USDA 110).